We begin with the raw amino-acid sequence, 100 residues long: Large ribosomal subunit protein uL23 (100 aa).

The protein belongs to the universal ribosomal protein uL23 family. In terms of assembly, part of the 50S ribosomal subunit. Contacts protein L29, and trigger factor when it is bound to the ribosome.

In terms of biological role, one of the early assembly proteins it binds 23S rRNA. One of the proteins that surrounds the polypeptide exit tunnel on the outside of the ribosome. Forms the main docking site for trigger factor binding to the ribosome. In Xylella fastidiosa (strain 9a5c), this protein is Large ribosomal subunit protein uL23.